The sequence spans 388 residues: Dual-specificity RNA methyltransferase RlmN (388 aa).

The Proton acceptor role is filled by Glu-109. A Radical SAM core domain is found at 115–354 (EEDRATLCVS…TIVRKTRGDD (240 aa)). Cys-122 and Cys-359 are oxidised to a cystine. [4Fe-4S] cluster-binding residues include Cys-129, Cys-133, and Cys-136. Residues 183–184 (GE), Ser-215, 237–239 (SLH), and Asn-316 contribute to the S-adenosyl-L-methionine site. Cys-359 functions as the S-methylcysteine intermediate in the catalytic mechanism.

Belongs to the radical SAM superfamily. RlmN family. [4Fe-4S] cluster is required as a cofactor.

The protein localises to the cytoplasm. It catalyses the reaction adenosine(2503) in 23S rRNA + 2 reduced [2Fe-2S]-[ferredoxin] + 2 S-adenosyl-L-methionine = 2-methyladenosine(2503) in 23S rRNA + 5'-deoxyadenosine + L-methionine + 2 oxidized [2Fe-2S]-[ferredoxin] + S-adenosyl-L-homocysteine. The enzyme catalyses adenosine(37) in tRNA + 2 reduced [2Fe-2S]-[ferredoxin] + 2 S-adenosyl-L-methionine = 2-methyladenosine(37) in tRNA + 5'-deoxyadenosine + L-methionine + 2 oxidized [2Fe-2S]-[ferredoxin] + S-adenosyl-L-homocysteine. Specifically methylates position 2 of adenine 2503 in 23S rRNA and position 2 of adenine 37 in tRNAs. m2A2503 modification seems to play a crucial role in the proofreading step occurring at the peptidyl transferase center and thus would serve to optimize ribosomal fidelity. This chain is Dual-specificity RNA methyltransferase RlmN, found in Klebsiella pneumoniae subsp. pneumoniae (strain ATCC 700721 / MGH 78578).